A 137-amino-acid chain; its full sequence is MMQPKKTKFRKAHKGRIHGVASSGATLSFGQFGLKAMAPERITARQIEAARRALTRHMKRVGRVWIRVFPDVPVSKKPAEVRMGSGKGSPELWVVRVKPGRILFEIDGVNDQIAREALTLAAAKLPIKTRFVARIAE.

The protein belongs to the universal ribosomal protein uL16 family. Part of the 50S ribosomal subunit.

Functionally, binds 23S rRNA and is also seen to make contacts with the A and possibly P site tRNAs. In Afipia carboxidovorans (strain ATCC 49405 / DSM 1227 / KCTC 32145 / OM5) (Oligotropha carboxidovorans), this protein is Large ribosomal subunit protein uL16.